The primary structure comprises 1714 residues: Latrophilin Cirl (1714 aa).

Over 1 to 765 (MSSIDISGRY…LFTMFDGNMR (765 aa)) the chain is Extracellular. Residues 26–115 (ACEGKKLTIE…KYLEAHYQCI (90 aa)) enclose the SUEL-type lectin domain. Asn143 carries N-linked (GlcNAc...) asparagine glycosylation. The segment at 183 to 302 (PPHTVTHSTP…GSPASGNNSV (120 aa)) is disordered. Positions 186 to 198 (TVTHSTPSSSTVP) are enriched in low complexity. A compositionally biased stretch (polar residues) spans 244-262 (PSSKLPSAGNATAPSNTRI). N-linked (GlcNAc...) asparagine glycosylation is present at Asn253. Composition is skewed to low complexity over residues 272–282 (DDGTLLTTKSS) and 290–301 (ASNGSPASGNNS). N-linked (GlcNAc...) asparagine glycans are attached at residues Asn299, Asn338, Asn395, Asn652, Asn701, and Asn728. A disordered region spans residues 373 to 397 (YDEYDDDPSSTTPAPSGGDCLHNSS). The 195-residue stretch at 558–752 (RSVVQKVKNI…AILMDVVDEH (195 aa)) folds into the GAIN-B domain. 2 cysteine pairs are disulfide-bonded: Cys707–Cys734 and Cys722–Cys736. Residues 707-752 (CVFWNYIDHAWSANGCSLESTNRTHSVCSCNHLTNFAILMDVVDEH) form a GPS region. Residues 766 to 786 (VFIYISIAICVVFIVIALLTL) form a helical membrane-spanning segment. Topologically, residues 787–799 (KLFNGVFVKSART) are cytoplasmic. The helical transmembrane segment at 800-820 (TIYTSIYVCLLAIELLFLLGI) threads the bilayer. At 821–826 (EQTETS) the chain is on the extracellular side. Residues 827-847 (IFCGFITVFLHCAILSGAAWF) traverse the membrane as a helical segment. Residues 848–873 (CYEAFHSYYTLTSDELLVEVDQTPKV) lie on the Cytoplasmic side of the membrane. The helical transmembrane segment at 874–894 (NWYYLLSYGLSVSVVAISVAI) threads the bilayer. At 895–911 (NPSTYTQNDYCVLMEAN) the chain is on the extracellular side. The helical transmembrane segment at 912–932 (ILFYATFVAPVLIFFVAAIGY) threads the bilayer. Over 933–966 (TFLSWIIMCRKSCTGLKTKEHTRLASVRFDIRCS) the chain is Cytoplasmic. The helical transmembrane segment at 967 to 987 (FVFLLLLSAVWCSAYFYLRGA) threads the bilayer. Over 988-994 (KTDEDTT) the chain is Extracellular. The chain crosses the membrane as a helical span at residues 995 to 1015 (TIYGYCFICFNTLLGLYIFVF). The Cytoplasmic segment spans residues 1016-1714 (HCIQNEKIRR…VRCYLEPLAK (699 aa)). Phosphoserine occurs at positions 1155, 1245, and 1252. 5 disordered regions span residues 1229–1253 (PNSQHGKKKRGGAVPASPSGSLHSR), 1268–1287 (KTKQGQPSGYPHYAEALDPP), 1293–1354 (AFYQ…PPPH), 1447–1536 (GGGS…DERM), and 1551–1694 (FQRQ…QQRH). Over residues 1296–1315 (QQQQQMRRQQQQQQQQQQQQ) the composition is skewed to low complexity. Residues Ser1317 and Ser1318 each carry the phosphoserine modification. Composition is skewed to low complexity over residues 1330–1348 (LHLQHQQQHQRRVGGQQQL) and 1453–1478 (GGSVSSRSQQQQLQKQQKQQQQQQQR). Composition is skewed to acidic residues over residues 1486–1500 (DDDDDDDEEEDDEAT) and 1510–1523 (CDDDDEEEDSDLDD). The span at 1524-1536 (DAHKLPPQSDERM) shows a compositional bias: basic and acidic residues. Residues 1565–1580 (GALPPGVAPGAGSAGP) show a composition bias toward low complexity. Over residues 1644 to 1659 (QTPAQKRQQLQKLSPQ) the composition is skewed to polar residues. The segment covering 1660-1675 (STTSSSSHTSHSNLQP) has biased composition (low complexity). Residues 1679–1693 (PLTHQHPHPPQHQQR) show a composition bias toward basic residues.

The protein belongs to the G-protein coupled receptor 2 family. LN-TM7 subfamily. As to quaternary structure, forms a heterodimer, consisting of a large extracellular region non-covalently linked to a seven-transmembrane moiety. In terms of processing, proteolytically cleaved into 2 subunits, an extracellular subunit and a seven-transmembrane subunit.

It is found in the cell membrane. The protein is Latrophilin Cirl of Drosophila ananassae (Fruit fly).